The primary structure comprises 954 residues: Glycine dehydrogenase (decarboxylating) (954 aa).

At Lys-706 the chain carries N6-(pyridoxal phosphate)lysine.

This sequence belongs to the GcvP family. The glycine cleavage system is composed of four proteins: P, T, L and H. It depends on pyridoxal 5'-phosphate as a cofactor.

The enzyme catalyses N(6)-[(R)-lipoyl]-L-lysyl-[glycine-cleavage complex H protein] + glycine + H(+) = N(6)-[(R)-S(8)-aminomethyldihydrolipoyl]-L-lysyl-[glycine-cleavage complex H protein] + CO2. Functionally, the glycine cleavage system catalyzes the degradation of glycine. The P protein binds the alpha-amino group of glycine through its pyridoxal phosphate cofactor; CO(2) is released and the remaining methylamine moiety is then transferred to the lipoamide cofactor of the H protein. The polypeptide is Glycine dehydrogenase (decarboxylating) (Thermosynechococcus vestitus (strain NIES-2133 / IAM M-273 / BP-1)).